A 796-amino-acid chain; its full sequence is Volume-regulated anion channel subunit LRRC8E (796 aa).

At 1–22 the chain is on the cytoplasmic side; it reads MIPVAEFKQFTEQQPAFKVLKP. A helical membrane pass occupies residues 23 to 43; that stretch reads WWDVLAEYLTVAMLMIGVFGC. Topologically, residues 44–116 are extracellular; it reads TLQVTQDKII…YETALHWYAK (73 aa). A disulfide bond links Cys54 and Cys301. Asn63 carries an N-linked (GlcNAc...) asparagine glycan. Residues 117–137 form a helical membrane-spanning segment; that stretch reads YFPYLVVIHTLIFMVCTSFWF. Residues 138 to 265 are Cytoplasmic-facing; it reads KFPGTSSKIE…IRQTVLKVCK (128 aa). Residues 266–286 traverse the membrane as a helical segment; the sequence is FLAILVYNLVYVEKISFLVAC. At 287-313 the chain is on the extracellular side; it reads RVETSEVTGYASFCCNHTKAHLFSKLA. N-linked (GlcNAc...) asparagine glycosylation is present at Asn302. Residues 314 to 334 traverse the membrane as a helical segment; sequence FCYISFVCIYGLTCIYTLYWL. The Cytoplasmic portion of the chain corresponds to 335-796; that stretch reads FHRPLKEYSF…AEVRDKMEEE (462 aa). 11 LRR repeats span residues 508–529, 536–557, 559–579, 583–604, 606–627, 631–652, 654–675, 677–698, 700–721, 723–744, and 746–767; these read GLEELHLEGLFPQELARAATLE, QLKVLSLRSNAGKVPASVTDVA, HLQRLSLHNDGARLVALNSLK, ALRELELVACGLERIPHAVFSL, ALQELDLKDNHLRSIEEILSFQ, KLVTLRLWHNQIAYVPEHVRKL, SLEQLYLSYNKLETLPSQLGLC, GLRLLDVSHNGLHSLPPEVGLL, NLQHLALSYNALEALPEELFFC, KLRTLLLGDNQLSQLSPHVGAL, and ALSRLELKGNRLEALPEELGNC.

The protein belongs to the LRRC8 family. Heterohexamer; oligomerizes with other LRRC8 proteins (LRRC8A, LRRC8C, LRRC8D and/or LRRC8B) to form a heterohexamer. In vivo, the subunit composition may depend primarily on expression levels, and heterooligomeric channels containing various proportions of the different LRRC8 proteins may coexist.

The protein resides in the cell membrane. It is found in the endoplasmic reticulum membrane. It localises to the lysosome membrane. The catalysed reaction is chloride(in) = chloride(out). The enzyme catalyses iodide(out) = iodide(in). It catalyses the reaction taurine(out) = taurine(in). It carries out the reaction 2',3'-cGAMP(out) = 2',3'-cGAMP(in). Functionally, non-essential component of the volume-regulated anion channel (VRAC, also named VSOAC channel), an anion channel required to maintain a constant cell volume in response to extracellular or intracellular osmotic changes. The VRAC channel conducts iodide better than chloride and can also conduct organic osmolytes like taurine. Mediates efflux of amino acids, such as aspartate, in response to osmotic stress. The VRAC channel also mediates transport of immunoreactive cyclic dinucleotide GMP-AMP (2'-3'-cGAMP), an immune messenger produced in response to DNA virus in the cytosol. Channel activity requires LRRC8A plus at least one other family member (LRRC8B, LRRC8C, LRRC8D or LRRC8E); channel characteristics depend on the precise subunit composition. Also plays a role in lysosome homeostasis by forming functional lysosomal VRAC channels in response to low cytoplasmic ionic strength condition: lysosomal VRAC channels are necessary for the formation of large lysosome-derived vacuoles, which store and then expel excess water to maintain cytosolic water homeostasis. The chain is Volume-regulated anion channel subunit LRRC8E from Homo sapiens (Human).